Consider the following 250-residue polypeptide: 5-oxoprolinase subunit A (250 aa).

The protein belongs to the LamB/PxpA family. Forms a complex composed of PxpA, PxpB and PxpC.

It catalyses the reaction 5-oxo-L-proline + ATP + 2 H2O = L-glutamate + ADP + phosphate + H(+). Catalyzes the cleavage of 5-oxoproline to form L-glutamate coupled to the hydrolysis of ATP to ADP and inorganic phosphate. The protein is 5-oxoprolinase subunit A of Staphylococcus aureus (strain bovine RF122 / ET3-1).